The primary structure comprises 444 residues: MTTTTMAGTPVAPAAAKPWYKVLYVQVLIAIVLGAIVGWLWPTVATNDWIKALGDGFIKLIKMVIAPIIFCTVVSGIAHIQDAKKVGRIGVKALVYFEVVSTFALVIGLIIGNLVRPGAGFGNAAANEAAVATYAKQAAGQKSVDFVLHIIPDTVVGAFAQGEILQVLLFSVLFGFAIMSLGERGHTIRSFIDDAAHAVFGVISIVMRAAPIGAFGAMAYTIGKFGTGAILNLIGLIATFYVTAALFVFVVLGIIARLAGFSIFKFLAYIKDELLIVLGTSSSESALPSLMEKLERLGCSKSVVGLVVPTGYSFNLDGTNIYMTLATLFIAQALGFDLSFGQQLTILVVAMLTSKGASGITGAGFITLAATLAVVDPRLVPGMAIVLGIDKFMSECRALTNLCGNGVACVIVAWWEGELDRDKLNAGLSRQIDPTDMETAITTD.

The next 9 helical transmembrane spans lie at 22 to 42 (VLYV…WLWP), 60 to 80 (LIKM…IAHI), 95 to 115 (VYFE…GNLV), 162 to 182 (GEIL…MSLG), 198 to 218 (AVFG…FGAM), 236 to 256 (LIAT…GIIA), 321 to 341 (IYMT…LSFG), 346 to 366 (ILVV…AGFI), and 399 to 419 (LTNL…EGEL).

It belongs to the dicarboxylate/amino acid:cation symporter (DAACS) (TC 2.A.23) family.

The protein resides in the cell inner membrane. Responsible for the transport of dicarboxylates such as succinate, fumarate, and malate from the periplasm across the membrane. The sequence is that of C4-dicarboxylate transport protein 3 from Bradyrhizobium diazoefficiens (strain JCM 10833 / BCRC 13528 / IAM 13628 / NBRC 14792 / USDA 110).